A 418-amino-acid chain; its full sequence is Serine hydroxymethyltransferase (418 aa).

(6S)-5,6,7,8-tetrahydrofolate contacts are provided by residues L120 and 124–126; that span reads GHL. Residue K229 is modified to N6-(pyridoxal phosphate)lysine. 353 to 355 provides a ligand contact to (6S)-5,6,7,8-tetrahydrofolate; the sequence is SPF.

The protein belongs to the SHMT family. As to quaternary structure, homodimer. Pyridoxal 5'-phosphate serves as cofactor.

The protein localises to the cytoplasm. The catalysed reaction is (6R)-5,10-methylene-5,6,7,8-tetrahydrofolate + glycine + H2O = (6S)-5,6,7,8-tetrahydrofolate + L-serine. Its pathway is one-carbon metabolism; tetrahydrofolate interconversion. It functions in the pathway amino-acid biosynthesis; glycine biosynthesis; glycine from L-serine: step 1/1. Catalyzes the reversible interconversion of serine and glycine with tetrahydrofolate (THF) serving as the one-carbon carrier. This reaction serves as the major source of one-carbon groups required for the biosynthesis of purines, thymidylate, methionine, and other important biomolecules. Also exhibits THF-independent aldolase activity toward beta-hydroxyamino acids, producing glycine and aldehydes, via a retro-aldol mechanism. This is Serine hydroxymethyltransferase from Psychrobacter arcticus (strain DSM 17307 / VKM B-2377 / 273-4).